A 527-amino-acid polypeptide reads, in one-letter code: Putative GTP-binding protein 6 (527 aa).

In terms of domain architecture, Hflx-type G spans 306-470 (PIISILGYTN…QVETAVMKST (165 aa)). Residues 312-319 (GYTNSGKT), 338-342 (FATLD), 360-363 (DTIG), 429-432 (NKID), and 448-450 (SAL) each bind GTP. Residues T319 and T340 each contribute to the Mg(2+) site.

The protein belongs to the TRAFAC class OBG-HflX-like GTPase superfamily. HflX GTPase family. Mg(2+) is required as a cofactor.

This is Putative GTP-binding protein 6 (gtpbp6) from Xenopus laevis (African clawed frog).